Here is a 155-residue protein sequence, read N- to C-terminus: Transcriptional regulator MraZ (155 aa).

SpoVT-AbrB domains are found at residues 7–63 (REQH…EPSV) and 92–135 (LDQT…EPLR).

This sequence belongs to the MraZ family. In terms of assembly, forms oligomers.

The protein localises to the cytoplasm. Its subcellular location is the nucleoid. The polypeptide is Transcriptional regulator MraZ (Chlorobaculum tepidum (strain ATCC 49652 / DSM 12025 / NBRC 103806 / TLS) (Chlorobium tepidum)).